Reading from the N-terminus, the 471-residue chain is ATP synthase subunit beta (471 aa).

ATP is bound at residue 154-161; sequence GGAGVGKT.

The protein belongs to the ATPase alpha/beta chains family. In terms of assembly, F-type ATPases have 2 components, CF(1) - the catalytic core - and CF(0) - the membrane proton channel. CF(1) has five subunits: alpha(3), beta(3), gamma(1), delta(1), epsilon(1). CF(0) has three main subunits: a(1), b(2) and c(9-12). The alpha and beta chains form an alternating ring which encloses part of the gamma chain. CF(1) is attached to CF(0) by a central stalk formed by the gamma and epsilon chains, while a peripheral stalk is formed by the delta and b chains.

It localises to the cell membrane. The enzyme catalyses ATP + H2O + 4 H(+)(in) = ADP + phosphate + 5 H(+)(out). Functionally, produces ATP from ADP in the presence of a proton gradient across the membrane. The catalytic sites are hosted primarily by the beta subunits. This is ATP synthase subunit beta from Mesomycoplasma hyopneumoniae (strain 232) (Mycoplasma hyopneumoniae).